The following is a 281-amino-acid chain: Bifunctional protein FolD (281 aa).

Residues 164 to 166 (GRS) and serine 189 contribute to the NADP(+) site.

It belongs to the tetrahydrofolate dehydrogenase/cyclohydrolase family. As to quaternary structure, homodimer.

It catalyses the reaction (6R)-5,10-methylene-5,6,7,8-tetrahydrofolate + NADP(+) = (6R)-5,10-methenyltetrahydrofolate + NADPH. It carries out the reaction (6R)-5,10-methenyltetrahydrofolate + H2O = (6R)-10-formyltetrahydrofolate + H(+). The protein operates within one-carbon metabolism; tetrahydrofolate interconversion. Its function is as follows. Catalyzes the oxidation of 5,10-methylenetetrahydrofolate to 5,10-methenyltetrahydrofolate and then the hydrolysis of 5,10-methenyltetrahydrofolate to 10-formyltetrahydrofolate. The sequence is that of Bifunctional protein FolD from Enterococcus faecalis (strain ATCC 700802 / V583).